Consider the following 513-residue polypeptide: Probable lipid II flippase MurJ (513 aa).

The next 15 membrane-spanning stretches (helical) occupy residues 3 to 23 (ILKS…LGFM), 25 to 45 (DLLI…FLAF), 83 to 103 (FISN…AFGI), 133 to 153 (IMFP…ILNA), 162 to 182 (YSSI…TAYF), 186 to 206 (ILSL…YQFP), 221 to 241 (ILNL…LGMS), 245 to 265 (VSII…ISWI), 271 to 291 (LVEF…LPLL), 313 to 333 (LVCI…ESLI), 354 to 374 (IEFY…LAGF), 382 to 402 (TPMK…IFFI), 405 to 425 (FQYT…FFLL), 441 to 461 (WLRF…LLFI), and 481 to 501 (LFYI…CLGL).

This sequence belongs to the MurJ/MviN family.

The protein localises to the cell inner membrane. The protein operates within cell wall biogenesis; peptidoglycan biosynthesis. Functionally, involved in peptidoglycan biosynthesis. Transports lipid-linked peptidoglycan precursors from the inner to the outer leaflet of the cytoplasmic membrane. The polypeptide is Probable lipid II flippase MurJ (Buchnera aphidicola subsp. Baizongia pistaciae (strain Bp)).